Consider the following 863-residue polypeptide: Paramyosin (863 aa).

A nonhelical region region spans residues 1–26 (MSESHVKISRTIIRGTSPSTVRLESP). Positions 27–836 (VRELEDLLDL…ERTITIKRTI (810 aa)) form a coiled coil. The interval 837-863 (GGPGSRAVSVVREINSVSRGNRATSIM) is nonhelical region.

Belongs to the paramyosin family. Homodimer.

The protein resides in the cytoplasm. The protein localises to the myofibril. Its function is as follows. Paramyosin is a major structural component of many thick filaments isolated from invertebrate muscles. This Echinococcus granulosus (Hydatid tapeworm) protein is Paramyosin.